The chain runs to 395 residues: GDP-mannose 4,6 dehydratase (395 aa).

Polar residues-rich tracts occupy residues 1-13 (MLNT…STSD) and 24-36 (ESSS…QNGT). The segment at 1-44 (MLNTRLIAMSTSDGAPETKKQRPESSSNGSKDQNGTEAGAEGDS) is disordered. NADP(+) contacts are provided by residues 53–58 (GITGQD), 109–110 (DM), 131–135 (LAAQS), and Tyr-146. Residue Thr-178 is part of the active site. Catalysis depends on nucleophile residues Glu-180 and Tyr-202. Positions 206, 232, and 237 each coordinate NADP(+).

Belongs to the NAD(P)-dependent epimerase/dehydratase family. GDP-mannose 4,6-dehydratase subfamily. NADP(+) is required as a cofactor.

The catalysed reaction is GDP-alpha-D-mannose = GDP-4-dehydro-alpha-D-rhamnose + H2O. Its pathway is nucleotide-sugar biosynthesis; GDP-L-fucose biosynthesis via de novo pathway; GDP-L-fucose from GDP-alpha-D-mannose: step 1/2. Functionally, catalyzes the conversion of GDP-D-mannose to GDP-4-dehydro-6-deoxy-D-mannose (also known as GDP-4-keto-6-deoxy-D-mannose or GDP-4-dehydro-alpha-D-rhamnose), an essential step in the synthesis of GDP-fucose from GDP-mannose. The chain is GDP-mannose 4,6 dehydratase (Gmd) from Drosophila melanogaster (Fruit fly).